Consider the following 309-residue polypeptide: Pantoate--beta-alanine ligase (309 aa).

This sequence belongs to the pantothenate synthetase family.

The protein localises to the cytoplasm. It localises to the nucleus. The catalysed reaction is (R)-pantoate + beta-alanine + ATP = (R)-pantothenate + AMP + diphosphate + H(+). It participates in cofactor biosynthesis; (R)-pantothenate biosynthesis; (R)-pantothenate from (R)-pantoate and beta-alanine: step 1/1. Its function is as follows. Required for pantothenic acid biosynthesis. The protein is Pantoate--beta-alanine ligase (PAN6) of Saccharomyces cerevisiae (strain ATCC 204508 / S288c) (Baker's yeast).